The sequence spans 132 residues: Chemokine-like protein TAFA-5 (132 aa).

Positions 1–43 (MAPSPRTSSRQDATALPSMSSTFWAFMILASLLIAYCSQLAAG) are cleaved as a signal peptide. Asn-113 is a glycosylation site (N-linked (GlcNAc...) asparagine).

The protein belongs to the TAFA family. Expressed in the subcutaneous, brown, epididymal and perirenal adipose tissue (at protein level).

It is found in the secreted. Functionally, acts as a chemokine-like protein by regulating cell proliferation and migration through activation of G protein-coupled receptors (GPCRs), such as S1PR2 and FPR2. Stimulates chemotactic migration of macrophages mediated by the MAPK3/ERK1 and AKT1 pathway. Blocks TNFSF11/RANKL-induced osteoclast formation from macrophages by inhibiting up-regulation of osteoclast fusogenic and differentiation genes. Stimulation of macrophage migration and inhibition of osteoclast formation is mediated through the GPCR FPR2. Acts as an adipokine by negatively regulating vascular smooth muscle cell (VSMC) proliferation and migration in response to platelet-derived growth factor stimulation via GPCR S1PR2 and G protein GNA12/GNA13-transmitted RHOA signaling. Inhibits injury-induced cell proliferation and neointima formation in the femoral arteries. This chain is Chemokine-like protein TAFA-5 (Tafa5), found in Mus musculus (Mouse).